The chain runs to 787 residues: DNA ligase (787 aa).

NAD(+) is bound by residues 32–36 (DAEYD), 81–82 (SL), and Glu-121. Lys-123 acts as the N6-AMP-lysine intermediate in catalysis. Residues Arg-144, Glu-181, Lys-297, and Lys-321 each contribute to the NAD(+) site. Zn(2+) is bound by residues Cys-415, Cys-418, Cys-445, and Cys-451. In terms of domain architecture, BRCT spans 703–787 (VEGLPLAGQT…RLTELGVAVD (85 aa)).

It belongs to the NAD-dependent DNA ligase family. LigA subfamily. Requires Mg(2+) as cofactor. The cofactor is Mn(2+).

The catalysed reaction is NAD(+) + (deoxyribonucleotide)n-3'-hydroxyl + 5'-phospho-(deoxyribonucleotide)m = (deoxyribonucleotide)n+m + AMP + beta-nicotinamide D-nucleotide.. DNA ligase that catalyzes the formation of phosphodiester linkages between 5'-phosphoryl and 3'-hydroxyl groups in double-stranded DNA using NAD as a coenzyme and as the energy source for the reaction. It is essential for DNA replication and repair of damaged DNA. In Pseudomonas syringae pv. tomato (strain ATCC BAA-871 / DC3000), this protein is DNA ligase.